A 487-amino-acid chain; its full sequence is Probable glycine dehydrogenase (decarboxylating) subunit 2 (487 aa).

N6-(pyridoxal phosphate)lysine is present on lysine 269.

It belongs to the GcvP family. C-terminal subunit subfamily. In terms of assembly, the glycine cleavage system is composed of four proteins: P, T, L and H. In this organism, the P 'protein' is a heterodimer of two subunits. Pyridoxal 5'-phosphate is required as a cofactor.

The enzyme catalyses N(6)-[(R)-lipoyl]-L-lysyl-[glycine-cleavage complex H protein] + glycine + H(+) = N(6)-[(R)-S(8)-aminomethyldihydrolipoyl]-L-lysyl-[glycine-cleavage complex H protein] + CO2. The glycine cleavage system catalyzes the degradation of glycine. The P protein binds the alpha-amino group of glycine through its pyridoxal phosphate cofactor; CO(2) is released and the remaining methylamine moiety is then transferred to the lipoamide cofactor of the H protein. This Prosthecochloris aestuarii (strain DSM 271 / SK 413) protein is Probable glycine dehydrogenase (decarboxylating) subunit 2.